The sequence spans 239 residues: UDP-2,3-diacylglucosamine hydrolase (239 aa).

Mn(2+)-binding residues include Asp8, His10, Asp41, Asn78, and His113. 78 to 79 (NR) serves as a coordination point for substrate. 5 residues coordinate substrate: Asp121, Ser159, Asn163, Lys166, and His194. Mn(2+) contacts are provided by His194 and His196.

This sequence belongs to the LpxH family. Requires Mn(2+) as cofactor.

Its subcellular location is the cell inner membrane. The enzyme catalyses UDP-2-N,3-O-bis[(3R)-3-hydroxytetradecanoyl]-alpha-D-glucosamine + H2O = 2-N,3-O-bis[(3R)-3-hydroxytetradecanoyl]-alpha-D-glucosaminyl 1-phosphate + UMP + 2 H(+). It participates in glycolipid biosynthesis; lipid IV(A) biosynthesis; lipid IV(A) from (3R)-3-hydroxytetradecanoyl-[acyl-carrier-protein] and UDP-N-acetyl-alpha-D-glucosamine: step 4/6. Functionally, hydrolyzes the pyrophosphate bond of UDP-2,3-diacylglucosamine to yield 2,3-diacylglucosamine 1-phosphate (lipid X) and UMP by catalyzing the attack of water at the alpha-P atom. Involved in the biosynthesis of lipid A, a phosphorylated glycolipid that anchors the lipopolysaccharide to the outer membrane of the cell. The polypeptide is UDP-2,3-diacylglucosamine hydrolase (Shewanella sp. (strain ANA-3)).